The primary structure comprises 160 residues: Urease accessory protein UreE (160 aa).

It belongs to the UreE family.

Its subcellular location is the cytoplasm. Its function is as follows. Involved in urease metallocenter assembly. Binds nickel. Probably functions as a nickel donor during metallocenter assembly. This chain is Urease accessory protein UreE, found in Acinetobacter baumannii (strain ACICU).